Reading from the N-terminus, the 91-residue chain is Antitoxin RelJ (91 aa).

This sequence belongs to the phD/YefM antitoxin family. As to quaternary structure, homodimer.

Functionally, antitoxin component of a type II toxin-antitoxin (TA) system. A probable antitoxin for the putative mRNA interferase RelK. The sequence is that of Antitoxin RelJ (relJ) from Mycobacterium tuberculosis (strain CDC 1551 / Oshkosh).